Consider the following 1863-residue polypeptide: Breast cancer type 1 susceptibility protein (1863 aa).

At Met-1 the chain carries N-acetylmethionine. The RING-type zinc-finger motif lies at 24–65; sequence CPICLELIKEPVSTKCDHIFCKFCMLKLLNQKKGPSQCPLCK. Residue Lys-109 forms a Glycyl lysine isopeptide (Lys-Gly) (interchain with G-Cter in SUMO2) linkage. At Ser-114 the chain carries Phosphoserine. The segment at 230–270 is disordered; it reads ETDVTNTEHHQPSNNDLNTTEKRAAERHPEKYQGSSVSNLH. Residues 248–260 are compositionally biased toward basic and acidic residues; that stretch reads TTEKRAAERHPEK. Lys-301 participates in a covalent cross-link: Glycyl lysine isopeptide (Lys-Gly) (interchain with G-Cter in SUMO2). The interval 306-338 is disordered; sequence NKSKQPGLARSQHNRWAGSKETCNDRRTPSTEK. Basic and acidic residues predominate over residues 327–338; it reads TCNDRRTPSTEK. Lys-339 participates in a covalent cross-link: Glycyl lysine isopeptide (Lys-Gly) (interchain with G-Cter in SUMO2). Phosphoserine occurs at positions 395, 398, 423, and 434. Glycyl lysine isopeptide (Lys-Gly) (interchain with G-Cter in SUMO2) cross-links involve residues Lys-443, Lys-459, and Lys-519. Low complexity predominate over residues 534–544; it reads QGTNQTEQNGQ. Positions 534–570 are disordered; sequence QGTNQTEQNGQVMNITNSGHENKTKGDSIQNEKNPNP. Ser-551 is modified (phosphoserine). Residues Lys-583 and Lys-654 each participate in a glycyl lysine isopeptide (Lys-Gly) (interchain with G-Cter in SUMO2) cross-link. The interval 654–709 is disordered; sequence KYNQMPVRHSRNLQLMEGKEPATGAKKSNKPNEQTSKRHDSDTFPELKLTNAPGSF. A phosphoserine mark is found at Ser-694, Ser-708, and Ser-725. Glycyl lysine isopeptide (Lys-Gly) (interchain with G-Cter in SUMO2) cross-links involve residues Lys-734 and Lys-739. Phosphoserine occurs at positions 753 and 840. Residues Lys-918 and Lys-987 each participate in a glycyl lysine isopeptide (Lys-Gly) (interchain with G-Cter in SUMO2) cross-link. The residue at position 988 (Ser-988) is a Phosphoserine; by CHEK2. Ser-1009 carries the post-translational modification Phosphoserine. Lys-1079 participates in a covalent cross-link: Glycyl lysine isopeptide (Lys-Gly) (interchain with G-Cter in SUMO2). Phosphoserine; by ATR; in vitro is present on Ser-1143. The tract at residues 1181 to 1216 is disordered; that stretch reads VQKGELSRSPSPFTHTHLAQGYRRGAKKLESSEENL. A phosphoserine mark is found at Ser-1189, Ser-1191, Ser-1211, Ser-1217, and Ser-1218. Phosphoserine; by ATR; in vitro is present on Ser-1280. The tract at residues 1322–1387 is disordered; that stretch reads KQMRHQSESQ…VSEDCSGLSS (66 aa). Phosphoserine is present on residues Ser-1328, Ser-1336, and Ser-1342. A compositionally biased stretch (polar residues) spans 1373-1387; that stretch reads ESETSVSEDCSGLSS. Ser-1387 carries the phosphoserine; by ATM and ATR modification. At Thr-1394 the chain carries Phosphothreonine; by ATR; in vitro. Residues 1397–1424 form an interaction with PALB2 region; sequence RDTMQHNLIKLQQEMAELEAVLEQHGSQ. Ser-1423 carries the post-translational modification Phosphoserine; by ATM and ATR. Residues 1440–1505 form a disordered region; that stretch reads EDLRNPEQST…SSPSKCPSLD (66 aa). Polar residues predominate over residues 1445–1470; sequence PEQSTSEKAVLTSQKSSEYPISQNPE. Phosphoserine; by ATR; in vitro is present on Ser-1457. Ser-1524 is modified (phosphoserine; by ATM). The residue at position 1542 (Ser-1542) is a Phosphoserine. Residues 1565–1596 form a disordered region; that stretch reads ESGISLFSDDPESDPSEDRAPESARVGNIPSS. BRCT domains are found at residues 1642–1736 and 1756–1855; these read STER…DFEV and QDRK…TYLI.

Heterodimer with BARD1. Part of the BRCA1-associated genome surveillance complex (BASC), which contains BRCA1, MSH2, MSH6, MLH1, ATM, BLM, PMS2 and the MRE11-RAD50-NBN protein (MRN) complex. This association could be a dynamic process changing throughout the cell cycle and within subnuclear domains. Component of the BRCA1-A complex, at least composed of BRCA1, BARD1, UIMC1/RAP80, ABRAXAS1, BRCC3/BRCC36, BABAM2 and BABAM1/NBA1. Interacts (via the BRCT domains) with ABRAXAS1 (phosphorylated form); this is important for recruitment to sites of DNA damage. Can form a heterotetramer with two molecules of ABRAXAS1 (phosphorylated form). Component of the BRCA1-RBBP8 complex. Interacts (via the BRCT domains) with RBBP8 ('Ser-327' phosphorylated form); the interaction ubiquitinates RBBP8, regulates CHEK1 activation, and involves RBBP8 in BRCA1-dependent G2/M checkpoint control on DNA damage. Associates with RNA polymerase II holoenzyme. Interacts with SMC1A, NELFB, DCLRE1C, CLSPN. Interacts with CHEK1, CHEK2, BAP1, BRCC3, UBXN1 and PCLAF. Interacts (via BRCT domains) with BRIP1 (phosphorylated form). Interacts with FANCD2 (ubiquitinated form). Interacts with H2AX (phosphorylated on 'Ser-140'). Interacts (via the BRCT domains) with ACACA (phosphorylated form); the interaction prevents dephosphorylation of ACACA. Part of a BRCA complex containing BRCA1, BRCA2 and PALB2. Interacts directly with PALB2; the interaction is essential for its function in HRR. Interacts directly with BRCA2; the interaction occurs only in the presence of PALB2 which serves as the bridging protein. Interacts (via the BRCT domains) with LMO4; the interaction represses the transcriptional activity of BRCA1. Interacts (via the BRCT domains) with CCAR2 (via N-terminus); the interaction represses the transcriptional activator activity of BRCA1. Interacts with EXD2. Interacts (via C-terminus) with DHX9; this interaction is direct and links BRCA1 to the RNA polymerase II holoenzyme. Interacts with DNA helicase ZGRF1; the interaction is increased following DNA damage induction. Post-translationally, phosphorylated in response to IR, UV, and various stimuli that cause checkpoint activation, probably by ATM or ATR. Phosphorylation at Ser-988 by CHEK2 regulates mitotic spindle assembly. Phosphorylation by AURKA regulates centrosomal microtubule nucleation. Autoubiquitinated, undergoes 'Lys-6'-linked polyubiquitination. 'Lys-6'-linked polyubiquitination does not promote degradation. In terms of tissue distribution, isoform 1 and isoform 3 are widely expressed. Isoform 3 is reduced or absent in several breast and ovarian cancer cell lines.

The protein resides in the nucleus. The protein localises to the chromosome. It localises to the cytoplasm. The catalysed reaction is S-ubiquitinyl-[E2 ubiquitin-conjugating enzyme]-L-cysteine + [acceptor protein]-L-lysine = [E2 ubiquitin-conjugating enzyme]-L-cysteine + N(6)-ubiquitinyl-[acceptor protein]-L-lysine.. It participates in protein modification; protein ubiquitination. The E3 ubiquitin-protein ligase activity is inhibited by phosphorylation by AURKA. Activity is increased by phosphatase treatment. Its function is as follows. E3 ubiquitin-protein ligase that specifically mediates the formation of 'Lys-6'-linked polyubiquitin chains and plays a central role in DNA repair by facilitating cellular responses to DNA damage. It is unclear whether it also mediates the formation of other types of polyubiquitin chains. The BRCA1-BARD1 heterodimer coordinates a diverse range of cellular pathways such as DNA damage repair, ubiquitination and transcriptional regulation to maintain genomic stability. Regulates centrosomal microtubule nucleation. Required for appropriate cell cycle arrests after ionizing irradiation in both the S-phase and the G2 phase of the cell cycle. Required for FANCD2 targeting to sites of DNA damage. Inhibits lipid synthesis by binding to inactive phosphorylated ACACA and preventing its dephosphorylation. Contributes to homologous recombination repair (HRR) via its direct interaction with PALB2, fine-tunes recombinational repair partly through its modulatory role in the PALB2-dependent loading of BRCA2-RAD51 repair machinery at DNA breaks. Component of the BRCA1-RBBP8 complex which regulates CHEK1 activation and controls cell cycle G2/M checkpoints on DNA damage via BRCA1-mediated ubiquitination of RBBP8. Acts as a transcriptional activator. The chain is Breast cancer type 1 susceptibility protein (BRCA1) from Homo sapiens (Human).